The following is a 144-amino-acid chain: Glutamyl-tRNA(Gln) amidotransferase subunit C, mitochondrial (144 aa).

The transit peptide at 1–17 (MFRRSVSFVRSHVLRSF) directs the protein to the mitochondrion.

This sequence belongs to the GatC family. In terms of assembly, subunit of the heterotrimeric GatCAB amidotransferase (AdT) complex, composed of A, B and C subunits.

The protein resides in the mitochondrion. The catalysed reaction is L-glutamyl-tRNA(Gln) + L-glutamine + ATP + H2O = L-glutaminyl-tRNA(Gln) + L-glutamate + ADP + phosphate + H(+). Allows the formation of correctly charged Gln-tRNA(Gln) through the transamidation of misacylated Glu-tRNA(Gln) in the mitochondria. The reaction takes place in the presence of glutamine and ATP through an activated gamma-phospho-Glu-tRNA(Gln). The chain is Glutamyl-tRNA(Gln) amidotransferase subunit C, mitochondrial from Ixodes scapularis (Black-legged tick).